A 179-amino-acid polypeptide reads, in one-letter code: Large ribosomal subunit protein uL6 (179 aa).

Belongs to the universal ribosomal protein uL6 family. Part of the 50S ribosomal subunit.

In terms of biological role, this protein binds to the 23S rRNA, and is important in its secondary structure. It is located near the subunit interface in the base of the L7/L12 stalk, and near the tRNA binding site of the peptidyltransferase center. The sequence is that of Large ribosomal subunit protein uL6 from Kineococcus radiotolerans (strain ATCC BAA-149 / DSM 14245 / SRS30216).